Here is a 266-residue protein sequence, read N- to C-terminus: Probable BRI1 kinase inhibitor 1 (266 aa).

Disordered stretches follow at residues Met-1–Arg-144 and Phe-167–Ser-242. Pro residues predominate over residues Arg-9–Leu-30. The span at Leu-31 to Pro-40 shows a compositional bias: low complexity. Positions Leu-77–Gly-93 are enriched in polar residues. Residues Ser-100 to Ala-109 are compositionally biased toward basic and acidic residues. Low complexity-rich tracts occupy residues Leu-210–Pro-221 and Val-229–Glu-241.

Negative regulator of brassinosteroid signaling. This is Probable BRI1 kinase inhibitor 1 (BKI1) from Oryza sativa subsp. indica (Rice).